The following is a 375-amino-acid chain: 4-hydroxy-3-methylbut-2-en-1-yl diphosphate synthase (flavodoxin) (375 aa).

Residues Cys-268, Cys-271, Cys-303, and Glu-310 each contribute to the [4Fe-4S] cluster site.

It belongs to the IspG family. Requires [4Fe-4S] cluster as cofactor.

It carries out the reaction (2E)-4-hydroxy-3-methylbut-2-enyl diphosphate + oxidized [flavodoxin] + H2O + 2 H(+) = 2-C-methyl-D-erythritol 2,4-cyclic diphosphate + reduced [flavodoxin]. It participates in isoprenoid biosynthesis; isopentenyl diphosphate biosynthesis via DXP pathway; isopentenyl diphosphate from 1-deoxy-D-xylulose 5-phosphate: step 5/6. Functionally, converts 2C-methyl-D-erythritol 2,4-cyclodiphosphate (ME-2,4cPP) into 1-hydroxy-2-methyl-2-(E)-butenyl 4-diphosphate. This is 4-hydroxy-3-methylbut-2-en-1-yl diphosphate synthase (flavodoxin) from Bacillus velezensis (strain DSM 23117 / BGSC 10A6 / LMG 26770 / FZB42) (Bacillus amyloliquefaciens subsp. plantarum).